Here is a 343-residue protein sequence, read N- to C-terminus: N-acetyl-gamma-glutamyl-phosphate reductase (343 aa).

Cys149 is a catalytic residue.

Belongs to the NAGSA dehydrogenase family. Type 1 subfamily.

The protein resides in the cytoplasm. The catalysed reaction is N-acetyl-L-glutamate 5-semialdehyde + phosphate + NADP(+) = N-acetyl-L-glutamyl 5-phosphate + NADPH + H(+). It functions in the pathway amino-acid biosynthesis; L-arginine biosynthesis; N(2)-acetyl-L-ornithine from L-glutamate: step 3/4. Catalyzes the NADPH-dependent reduction of N-acetyl-5-glutamyl phosphate to yield N-acetyl-L-glutamate 5-semialdehyde. The chain is N-acetyl-gamma-glutamyl-phosphate reductase from Exiguobacterium sibiricum (strain DSM 17290 / CCUG 55495 / CIP 109462 / JCM 13490 / 255-15).